A 522-amino-acid chain; its full sequence is MSFSRSAADAADTLPDLAATLGAPAERAFVTLGDAFHTRLPAAPLAAPYVVGFSDDVAQLLDLPPSIAAQPGFAELFAGNPTRDWPAHAMPYASVYSGHQFGVWAGQLGDGRALTIGELPGTDGRRYELQLKGGGRTPYSRMGDGRAVLRSSIREFLCSEAMHHLGIPTTRALTVIGSDQPVVREEIETAAVVTRVSESFVRFGHFEHFFSNDRPDLLRQLADHVIDRFYPACRDADDPYLALLEAATLRTADLVAQWQAVGFCHGVMNTDNMSILGVTIDYGPFGFVDAFDANHICNHSDTSGRYAYRMQPRIAHWNCYCLAQALLPLIGLQHGIADDDARAERAVDDAQAVLAKFPERFGPALERAMRAKLGLELEREGDAELANKLLETMHASHADFTLTFRRLAQISKHDASRDAPVRDLFIDREAFDAWANLYRARLSEETRDDAARAVAMNRANPKYVLRNHLAEVAIRRAKEKDFSEVERLAQILRRPFDEQPEHEAYAALPPDWAGSLEVSCSS.

Gly-109, Gly-111, Arg-112, Lys-132, Asp-144, Gly-145, Arg-195, and Arg-202 together coordinate ATP. The active-site Proton acceptor is Asp-271. Residues Asn-272 and Asp-281 each contribute to the Mg(2+) site. Asp-281 contacts ATP.

It belongs to the SELO family. The cofactor is Mg(2+). Requires Mn(2+) as cofactor.

It catalyses the reaction L-seryl-[protein] + ATP = 3-O-(5'-adenylyl)-L-seryl-[protein] + diphosphate. The enzyme catalyses L-threonyl-[protein] + ATP = 3-O-(5'-adenylyl)-L-threonyl-[protein] + diphosphate. The catalysed reaction is L-tyrosyl-[protein] + ATP = O-(5'-adenylyl)-L-tyrosyl-[protein] + diphosphate. It carries out the reaction L-histidyl-[protein] + UTP = N(tele)-(5'-uridylyl)-L-histidyl-[protein] + diphosphate. It catalyses the reaction L-seryl-[protein] + UTP = O-(5'-uridylyl)-L-seryl-[protein] + diphosphate. The enzyme catalyses L-tyrosyl-[protein] + UTP = O-(5'-uridylyl)-L-tyrosyl-[protein] + diphosphate. In terms of biological role, nucleotidyltransferase involved in the post-translational modification of proteins. It can catalyze the addition of adenosine monophosphate (AMP) or uridine monophosphate (UMP) to a protein, resulting in modifications known as AMPylation and UMPylation. The chain is Protein nucleotidyltransferase YdiU from Burkholderia cenocepacia (strain HI2424).